Here is a 449-residue protein sequence, read N- to C-terminus: Glutamyl-tRNA reductase (449 aa).

Substrate contacts are provided by residues 58 to 61 (TCNR), S121, 126 to 128 (ETQ), and Q132. The active-site Nucleophile is the C59. 203-208 (GLGEMA) serves as a coordination point for NADP(+).

It belongs to the glutamyl-tRNA reductase family. As to quaternary structure, homodimer.

It catalyses the reaction (S)-4-amino-5-oxopentanoate + tRNA(Glu) + NADP(+) = L-glutamyl-tRNA(Glu) + NADPH + H(+). It functions in the pathway porphyrin-containing compound metabolism; protoporphyrin-IX biosynthesis; 5-aminolevulinate from L-glutamyl-tRNA(Glu): step 1/2. Its function is as follows. Catalyzes the NADPH-dependent reduction of glutamyl-tRNA(Glu) to glutamate 1-semialdehyde (GSA). The sequence is that of Glutamyl-tRNA reductase from Helicobacter pylori (strain P12).